The chain runs to 385 residues: GDSL esterase/lipase At5g08460 (385 aa).

Positions 1–35 (MHDSEIFKFKDMMMMSCTVQTLVLVPWFLVVFVLA) are cleaved as a signal peptide. Ser56 functions as the Nucleophile in the catalytic mechanism. Asn218 and Asn285 each carry an N-linked (GlcNAc...) asparagine glycan. Catalysis depends on residues Asp350 and His353. N-linked (GlcNAc...) asparagine glycosylation is found at Asn368 and Asn378.

Belongs to the 'GDSL' lipolytic enzyme family.

The protein resides in the secreted. The chain is GDSL esterase/lipase At5g08460 from Arabidopsis thaliana (Mouse-ear cress).